We begin with the raw amino-acid sequence, 255 residues long: Adenylate dimethylallyltransferase (255 aa).

The protein belongs to the isopentenyl transferase family.

It carries out the reaction dimethylallyl diphosphate + AMP = N(6)-(dimethylallyl)adenosine 5'-phosphate + diphosphate. In terms of biological role, transfers dimethylallyl groups to AMP as part of the biosynthesis of cytokinin phytohormones. The polypeptide is Adenylate dimethylallyltransferase (fas4) (Rhodococcoides fascians (Rhodococcus fascians)).